Here is a 623-residue protein sequence, read N- to C-terminus: Heterogeneous nuclear ribonucleoprotein Q (623 aa).

An N-acetylalanine modification is found at Ala-2. Ser-159 bears the Phosphoserine mark. RRM domains follow at residues 162–241, 243–325, and 338–408; these read TEIF…ISVA, NRLF…WADP, and KVLF…FAKP. Lys-168 participates in a covalent cross-link: Glycyl lysine isopeptide (Lys-Gly) (interchain with G-Cter in SUMO2). At Lys-221 the chain carries N6-acetyllysine. Residue Lys-363 is modified to N6-acetyllysine. Tyr-373 bears the Phosphotyrosine mark. Residues 400–561 are interaction with APOBEC1; it reads NIEIVFAKPP…GARGGRGGNV (162 aa). At Arg-444 the chain carries Asymmetric dimethylarginine; by PRMT1; alternate. Arg-444 bears the Omega-N-methylarginine; by PRMT1; alternate mark. 6 repeat units span residues 448–450, 451–453, 460–464, 469–472, 478–480, and 485–488. The segment at 448 to 559 is 8 X 3 AA repeats of R-G-G; sequence RGGRGGYGYP…VRGARGGRGG (112 aa). Positions 460–488 are 3 X 4 AA repeats of Y-Y-G-Y; sequence YYGYEDYYDYYGYDYHNYRGGYEDPYYGY. Arg-496 is modified (omega-N-methylarginine; by PRMT1). The interval 497-623 is disordered; the sequence is GRGGRGARGA…YQDTFGQQWK (127 aa). One copy of the 1-4 repeat lies at 498 to 500; sequence RGG. The segment covering 504–522 has biased composition (low complexity); that stretch reads RGAAPSRGRGAAPPRGRAG. Residue Arg-510 is modified to Asymmetric dimethylarginine; by PRMT1. An asymmetric dimethylarginine; by PRMT1; alternate mark is found at Arg-518, Arg-526, Arg-536, and Arg-539. 4 positions are modified to omega-N-methylarginine; by PRMT1; alternate: Arg-518, Arg-526, Arg-536, and Arg-539. The tract at residues 518–549 is interaction with SMN; the sequence is RGRAGYSQRGGPGSARGVRGARGGAQQQRGRG. Residues 526–528 form a 1-5 repeat; the sequence is RGG. Repeat copies occupy residues 539 to 541, 554 to 556, and 557 to 559. Residues 550 to 562 are compositionally biased toward gly residues; that stretch reads VRGARGGRGGNVG. The Bipartite nuclear localization signal signature appears at 564-578; sequence KRKADGYNQPDSKRR. The segment covering 580 to 595 has biased composition (polar residues); that stretch reads TNNQNWGSQPIAQQPL. Phosphoserine is present on Ser-587. Lys-607 participates in a covalent cross-link: Glycyl lysine isopeptide (Lys-Gly) (interchain with G-Cter in SUMO2). The span at 611 to 623 shows a compositional bias: polar residues; the sequence is QEFYQDTFGQQWK.

In terms of assembly, isoform 1 is a component of the APOB mRNA editosome complex and interacts with APOBEC1 and A1CF (APOBEC1 complementation factor). Part of a complex associated with the FOS mCRD domain and consisting of PABPC1, PAIP1, CSDE1/UNR, HNRPD and SYNCRIP. Isoform 3 interacts with HNRPR. Interacts with POLR2A hyperphosphorylated C-terminal domain. Isoform 1, isoform 2 and isoform 3 interact with SMN. Isoform 3 interacts through its C-terminal domain with SYT7, SYT8 and SYT9. The non-phosphorylated and phosphorylated forms are colocalized with PAIP1 in polysomes. Interacts with HABP4. Identified in a histone pre-mRNA complex, at least composed of ERI1, LSM11, SLBP, SNRPB, SYNCRIP and YBX1. Identified in the spliceosome C complex. Component of the coding region determinant (CRD)-mediated complex, composed of DHX9, HNRNPU, IGF2BP1, SYNCRIP and YBX1. Identified in a mRNP complex, at least composed of DHX9, DDX3X, ELAVL1, HNRNPU, IGF2BP1, ILF3, PABPC1, PCBP2, PTBP2, STAU1, STAU2, SYNCRIP and YBX1. Identified in a mRNP granule complex, at least composed of ACTB, ACTN4, DHX9, ERG, HNRNPA1, HNRNPA2B1, HNRNPAB, HNRNPD, HNRNPL, HNRNPR, HNRNPU, HSPA1, HSPA8, IGF2BP1, ILF2, ILF3, NCBP1, NCL, PABPC1, PABPC4, PABPN1, RPLP0, RPS3, RPS3A, RPS4X, RPS8, RPS9, SYNCRIP, YBX1 and untranslated mRNAs. Interacts with GTPBP1. Component of the GAIT complex; in humans the complex assembly seems to be a two-step process in which EPRS1 first associates with SYNCRIP to form a pre-GAIT complex which is deficient in GAIT element binding. As to quaternary structure, (Microbial infection) Interacts with minute virus of mice (MVM) NS1 protein. (Microbial infection) Interacts with herpes virus 8/HHV-8 protein vIRF-1; this interaction induces ubiquitination and degradation of SYNCRIP. Post-translationally, phosphorylated on tyrosine. The membrane-bound form found in microsomes is phosphorylated in vitro by insulin receptor tyrosine kinase (INSR). Phosphorylation is inhibited upon binding to RNA, whereas the cytoplasmic form is poorly phosphorylated. In terms of tissue distribution, ubiquitously expressed. Detected in heart, brain, pancreas, placenta, spleen, lung, liver, skeletal muscle, kidney, thymus, prostate, uterus, small intestine, colon, peripheral blood and testis.

The protein localises to the cytoplasm. The protein resides in the microsome. It is found in the endoplasmic reticulum. It localises to the nucleus. Its subcellular location is the nucleoplasm. Functionally, heterogenous nuclear ribonucleoprotein (hnRNP) implicated in mRNA processing mechanisms. Component of the CRD-mediated complex that promotes MYC mRNA stability. Isoform 1, isoform 2 and isoform 3 are associated in vitro with pre-mRNA, splicing intermediates and mature mRNA protein complexes. Isoform 1 binds to apoB mRNA AU-rich sequences. Isoform 1 is part of the APOB mRNA editosome complex and may modulate the postranscriptional C to U RNA-editing of the APOB mRNA through either by binding to A1CF (APOBEC1 complementation factor), to APOBEC1 or to RNA itself. May be involved in translationally coupled mRNA turnover. Implicated with other RNA-binding proteins in the cytoplasmic deadenylation/translational and decay interplay of the FOS mRNA mediated by the major coding-region determinant of instability (mCRD) domain. Interacts in vitro preferentially with poly(A) and poly(U) RNA sequences. Isoform 3 may be involved in cytoplasmic vesicle-based mRNA transport through interaction with synaptotagmins. Component of the GAIT (gamma interferon-activated inhibitor of translation) complex which mediates interferon-gamma-induced transcript-selective translation inhibition in inflammation processes. Upon interferon-gamma activation assembles into the GAIT complex which binds to stem loop-containing GAIT elements in the 3'-UTR of diverse inflammatory mRNAs (such as ceruplasmin) and suppresses their translation; seems not to be essential for GAIT complex function. This chain is Heterogeneous nuclear ribonucleoprotein Q (SYNCRIP), found in Homo sapiens (Human).